The sequence spans 138 residues: Cysteine desulfuration protein SufE (138 aa).

Cys-51 serves as the catalytic Cysteine persulfide intermediate.

It belongs to the SufE family. In terms of assembly, homodimer. Interacts with SufS.

It localises to the cytoplasm. The protein operates within cofactor biosynthesis; iron-sulfur cluster biosynthesis. In terms of biological role, participates in cysteine desulfuration mediated by SufS. Cysteine desulfuration mobilizes sulfur from L-cysteine to yield L-alanine and constitutes an essential step in sulfur metabolism for biosynthesis of a variety of sulfur-containing biomolecules. Functions as a sulfur acceptor for SufS, by mediating the direct transfer of the sulfur atom from the S-sulfanylcysteine of SufS, an intermediate product of cysteine desulfuration process. The sequence is that of Cysteine desulfuration protein SufE from Escherichia coli O157:H7.